A 445-amino-acid polypeptide reads, in one-letter code: Phosphoglucosamine mutase (445 aa).

The active-site Phosphoserine intermediate is serine 102. 4 residues coordinate Mg(2+): serine 102, aspartate 241, aspartate 243, and aspartate 245. Serine 102 carries the post-translational modification Phosphoserine.

It belongs to the phosphohexose mutase family. Mg(2+) is required as a cofactor. Activated by phosphorylation.

It carries out the reaction alpha-D-glucosamine 1-phosphate = D-glucosamine 6-phosphate. In terms of biological role, catalyzes the conversion of glucosamine-6-phosphate to glucosamine-1-phosphate. This chain is Phosphoglucosamine mutase, found in Shigella boydii serotype 4 (strain Sb227).